A 426-amino-acid polypeptide reads, in one-letter code: Protein FAM124B (426 aa).

The protein belongs to the FAM124 family.

It localises to the nucleus. This Xenopus tropicalis (Western clawed frog) protein is Protein FAM124B (fam124b).